A 370-amino-acid chain; its full sequence is MGSSLPFDLILEILQRTPAESLLRFKSTCKKWYELISNDKRFMYKHLDKSTKRFLRIENRERVQILDPVTEILAVSTIPNELRHKYFTLIHCDGLMLGMCYEELGSDPNLAVWNPVMRKIKWIKPSPPLVCYWGSDYLGFGYDKTFRDNYKILRFTYLGDDDDDESYPKCQIYEFNSGSWRSIEAKFDGEIDVEVDGVSVNGSMYWIELQEKKNFILSFDFSKETFNRICDSPLYWDIKRLGCFNGDRLSLLQQNEATREIHVSVTNKLSDEVVSFSRYFSVTLPDIPLFRSIDILPLPGCFIGKNRNIIAWCEQLVGKYDDHTSIILYEIGEGGVTKRIRTGRHEADEDYNDLDNCSYVYVPSLIPVPE.

The F-box domain maps to 1-47; the sequence is MGSSLPFDLILEILQRTPAESLLRFKSTCKKWYELISNDKRFMYKHL.

This Arabidopsis thaliana (Mouse-ear cress) protein is Putative F-box protein At3g10430.